Here is a 240-residue protein sequence, read N- to C-terminus: Rho GDP-dissociation inhibitor 1 (240 aa).

The tract at residues Met1 to Pro66 is disordered.

The protein belongs to the Rho GDI family. As to quaternary structure, interacts with RAC-like GTP binding proteins ARAC5/ROP4 and ARAC3/ROP6.

It is found in the cytoplasm. Regulates the GDP/GTP exchange reaction of the Rho proteins by inhibiting the dissociation of GDP from them, and the subsequent binding of GTP to them. This Arabidopsis thaliana (Mouse-ear cress) protein is Rho GDP-dissociation inhibitor 1 (GDI1).